The primary structure comprises 135 residues: Flagellar assembly factor FliW 1 (135 aa).

It belongs to the FliW family. In terms of assembly, interacts with translational regulator CsrA and flagellin(s).

It localises to the cytoplasm. Acts as an anti-CsrA protein, binds CsrA and prevents it from repressing translation of its target genes, one of which is flagellin. Binds to flagellin and participates in the assembly of the flagellum. In Helicobacter pylori (strain HPAG1), this protein is Flagellar assembly factor FliW 1.